An 825-amino-acid chain; its full sequence is Endochitinase A1 (825 aa).

A signal peptide spans 1 to 22 (MVSSKLSFVATAVAALAPLASA). A GH18 domain is found at 29–338 (SNLAIYWGQG…DHMKDILLHC (310 aa)). Residue E174 is the Proton donor of the active site. Disordered stretches follow at residues 338 to 568 (CDPS…TTTA), 680 to 736 (PVTE…VSTS), and 750 to 792 (PLIL…YTQE). Residues 344–554 (VTSSSAVPSS…STDESSTTVG (211 aa)) show a composition bias toward low complexity. N-linked (GlcNAc...) asparagine glycosylation occurs at N559. Residues 701–712 (EGSNPTQPSGAS) show a composition bias toward polar residues. N717 carries an N-linked (GlcNAc...) asparagine glycan. Positions 772–792 (PSGQNSGSSSHVPIPPSYTQE) are enriched in polar residues. The GPI-anchor amidated glycine moiety is linked to residue G800. Residues 801–825 (AASRVTGLGHGLVLTVLTLSAFFVL) constitute a propeptide, removed in mature form.

Belongs to the glycosyl hydrolase 18 family. Chitinase class III subfamily. Post-translationally, O-mannosylated by pmt4.

It localises to the cell membrane. The protein resides in the secreted. The protein localises to the cell wall. The catalysed reaction is Random endo-hydrolysis of N-acetyl-beta-D-glucosaminide (1-&gt;4)-beta-linkages in chitin and chitodextrins.. With respect to regulation, the cyclic peptide natural product argifin acts as a specific inhibitor. In terms of biological role, GPI-anchored chitinase involved in the degradation of chitin, a component of the cell walls of fungi and exoskeletal elements of some animals (including worms and arthropods). Required to reshape the cell wall at the sites where cell wall remodeling and/or cell wall maturation actively take place such as sites of conidia formation. The protein is Endochitinase A1 (chiA1) of Aspergillus fumigatus (Neosartorya fumigata).